The chain runs to 205 residues: Protein-L-isoaspartate O-methyltransferase (205 aa).

S56 is an active-site residue.

The protein belongs to the methyltransferase superfamily. L-isoaspartyl/D-aspartyl protein methyltransferase family.

Its subcellular location is the cytoplasm. The catalysed reaction is [protein]-L-isoaspartate + S-adenosyl-L-methionine = [protein]-L-isoaspartate alpha-methyl ester + S-adenosyl-L-homocysteine. Catalyzes the methyl esterification of L-isoaspartyl residues in peptides and proteins that result from spontaneous decomposition of normal L-aspartyl and L-asparaginyl residues. It plays a role in the repair and/or degradation of damaged proteins. The protein is Protein-L-isoaspartate O-methyltransferase of Aeromonas salmonicida (strain A449).